Consider the following 1002-residue polypeptide: Lon protease homolog, mitochondrial (1002 aa).

The region spanning 102 to 313 (VIALPLPHRP…LTLELVKKEM (212 aa)) is the Lon N-terminal domain. Position 468-475 (468-475 (GPPGVGKT)) interacts with ATP. The Lon proteolytic domain maps to 811-995 (QTPVGVVMGL…NEIFDIAFQS (185 aa)). Catalysis depends on residues S901 and K944.

This sequence belongs to the peptidase S16 family. In terms of assembly, homohexamer or homoheptamer. Organized in a ring with a central cavity.

The protein localises to the mitochondrion matrix. The catalysed reaction is Hydrolysis of proteins in presence of ATP.. In terms of biological role, ATP-dependent serine protease that mediates the selective degradation of misfolded, unassembled or oxidatively damaged polypeptides as well as certain short-lived regulatory proteins in the mitochondrial matrix. May also have a chaperone function in the assembly of inner membrane protein complexes. Participates in the regulation of mitochondrial gene expression and in the maintenance of the integrity of the mitochondrial genome. Binds to mitochondrial DNA in a site-specific manner. This chain is Lon protease homolog, mitochondrial, found in Oryza sativa subsp. indica (Rice).